Here is a 119-residue protein sequence, read N- to C-terminus: Large ribosomal subunit protein uL18 (119 aa).

It belongs to the universal ribosomal protein uL18 family. In terms of assembly, part of the 50S ribosomal subunit; part of the 5S rRNA/L5/L18/L25 subcomplex. Contacts the 5S and 23S rRNAs.

This is one of the proteins that bind and probably mediate the attachment of the 5S RNA into the large ribosomal subunit, where it forms part of the central protuberance. This chain is Large ribosomal subunit protein uL18, found in Clostridium botulinum (strain Langeland / NCTC 10281 / Type F).